Reading from the N-terminus, the 412-residue chain is Multifunctional CCA protein (412 aa).

ATP contacts are provided by Gly8 and Arg11. Residues Gly8 and Arg11 each coordinate CTP. Mg(2+) contacts are provided by Asp21 and Asp23. ATP-binding residues include Arg91, Arg137, and Arg140. CTP-binding residues include Arg91, Arg137, and Arg140. One can recognise an HD domain in the interval 228–329 (TGIHTLMTLS…VKLFDSIDAW (102 aa)).

This sequence belongs to the tRNA nucleotidyltransferase/poly(A) polymerase family. Bacterial CCA-adding enzyme type 1 subfamily. In terms of assembly, monomer. Can also form homodimers and oligomers. Mg(2+) is required as a cofactor. Ni(2+) serves as cofactor.

The catalysed reaction is a tRNA precursor + 2 CTP + ATP = a tRNA with a 3' CCA end + 3 diphosphate. It carries out the reaction a tRNA with a 3' CCA end + 2 CTP + ATP = a tRNA with a 3' CCACCA end + 3 diphosphate. In terms of biological role, catalyzes the addition and repair of the essential 3'-terminal CCA sequence in tRNAs without using a nucleic acid template. Adds these three nucleotides in the order of C, C, and A to the tRNA nucleotide-73, using CTP and ATP as substrates and producing inorganic pyrophosphate. tRNA 3'-terminal CCA addition is required both for tRNA processing and repair. Also involved in tRNA surveillance by mediating tandem CCA addition to generate a CCACCA at the 3' terminus of unstable tRNAs. While stable tRNAs receive only 3'-terminal CCA, unstable tRNAs are marked with CCACCA and rapidly degraded. The sequence is that of Multifunctional CCA protein from Escherichia coli O8 (strain IAI1).